The primary structure comprises 148 residues: Large ribosomal subunit protein bL9 (148 aa).

Belongs to the bacterial ribosomal protein bL9 family.

Functionally, binds to the 23S rRNA. The protein is Large ribosomal subunit protein bL9 of Pseudomonas fluorescens (strain Pf0-1).